The chain runs to 179 residues: Large ribosomal subunit protein uL6 (179 aa).

Belongs to the universal ribosomal protein uL6 family. Part of the 50S ribosomal subunit.

Functionally, this protein binds to the 23S rRNA, and is important in its secondary structure. It is located near the subunit interface in the base of the L7/L12 stalk, and near the tRNA binding site of the peptidyltransferase center. The chain is Large ribosomal subunit protein uL6 from Synechococcus sp. (strain RCC307).